Consider the following 184-residue polypeptide: ATP synthase subunit b, chloroplastic (184 aa).

The chain crosses the membrane as a helical span at residues leucine 27–leucine 49.

The protein belongs to the ATPase B chain family. In terms of assembly, F-type ATPases have 2 components, F(1) - the catalytic core - and F(0) - the membrane proton channel. F(1) has five subunits: alpha(3), beta(3), gamma(1), delta(1), epsilon(1). F(0) has four main subunits: a(1), b(1), b'(1) and c(10-14). The alpha and beta chains form an alternating ring which encloses part of the gamma chain. F(1) is attached to F(0) by a central stalk formed by the gamma and epsilon chains, while a peripheral stalk is formed by the delta, b and b' chains.

Its subcellular location is the plastid. It is found in the chloroplast thylakoid membrane. F(1)F(0) ATP synthase produces ATP from ADP in the presence of a proton or sodium gradient. F-type ATPases consist of two structural domains, F(1) containing the extramembraneous catalytic core and F(0) containing the membrane proton channel, linked together by a central stalk and a peripheral stalk. During catalysis, ATP synthesis in the catalytic domain of F(1) is coupled via a rotary mechanism of the central stalk subunits to proton translocation. Functionally, component of the F(0) channel, it forms part of the peripheral stalk, linking F(1) to F(0). The sequence is that of ATP synthase subunit b, chloroplastic from Oenothera argillicola (Appalachian evening primrose).